Here is a 65-residue protein sequence, read N- to C-terminus: Large ribosomal subunit protein bL35 (65 aa).

The segment at 1-22 is disordered; the sequence is MPKIKTVRGAAKRFKKTGKGGF. Residues 10-22 are compositionally biased toward basic residues; the sequence is AAKRFKKTGKGGF.

Belongs to the bacterial ribosomal protein bL35 family.

This is Large ribosomal subunit protein bL35 from Klebsiella pneumoniae (strain 342).